Here is a 39-residue protein sequence, read N- to C-terminus: Cytochrome b559 subunit beta (39 aa).

A helical transmembrane segment spans residues 14-30 (WLAVHGLAVPTVFFLGS). His18 is a binding site for heme.

This sequence belongs to the PsbE/PsbF family. As to quaternary structure, heterodimer of an alpha subunit and a beta subunit. PSII is composed of 1 copy each of membrane proteins PsbA, PsbB, PsbC, PsbD, PsbE, PsbF, PsbH, PsbI, PsbJ, PsbK, PsbL, PsbM, PsbT, PsbX, PsbY, PsbZ, Psb30/Ycf12, at least 3 peripheral proteins of the oxygen-evolving complex and a large number of cofactors. It forms dimeric complexes. Requires heme b as cofactor.

The protein localises to the plastid membrane. In terms of biological role, this b-type cytochrome is tightly associated with the reaction center of photosystem II (PSII). PSII is a light-driven water:plastoquinone oxidoreductase that uses light energy to abstract electrons from H(2)O, generating O(2) and a proton gradient subsequently used for ATP formation. It consists of a core antenna complex that captures photons, and an electron transfer chain that converts photonic excitation into a charge separation. The sequence is that of Cytochrome b559 subunit beta from Cuscuta europaea (European dodder).